Here is a 437-residue protein sequence, read N- to C-terminus: Vacuolar protein sorting-associated protein 4A (437 aa).

The interaction with CHMP1B stretch occupies residues 1–84; the sequence is MTTSTLQKAI…RSKEKHGKKP (84 aa). Residues 2 to 80 enclose the MIT domain; sequence TTSTLQKAID…KDYLRSKEKH (79 aa). At K8 the chain carries N6-acetyllysine. The tract at residues 75 to 106 is disordered; that stretch reads RSKEKHGKKPVKENQSEGKGSDSDSEGDNPEK. Basic and acidic residues predominate over residues 84–96; it reads PVKENQSEGKGSD. 2 positions are modified to phosphoserine: S95 and S97. Residue 167 to 174 participates in ATP binding; it reads GPPGTGKS.

The protein belongs to the AAA ATPase family. In terms of assembly, proposed to be monomeric or homodimeric in nucleotide-free form and to oligomerize upon binding to ATP to form two stacked hexameric or heptameric rings with a central pore through which ESCRT-III substrates are translocated in an ATP-dependent manner. Interacts with CHMP1A, CHMP1B, CHMP2A, CHMP2B, CHMP3, CHMP4A, CHMP4B, CHMP4C and CHMP6. Interacts with VPS4B; the interaction suggests a heteromeric assembly with VPS4B. Interacts with SPAST. Interacts with IST1. Interacts with ZFYVE19/ANCHR; leading to retain it at midbody. In terms of tissue distribution, ubiquitously expressed.

The protein resides in the late endosome membrane. The protein localises to the midbody. Its subcellular location is the cytoplasm. It is found in the cytoskeleton. It localises to the spindle. The catalysed reaction is ATP + H2O = ADP + phosphate + H(+). Its function is as follows. Involved in late steps of the endosomal multivesicular bodies (MVB) pathway. Recognizes membrane-associated ESCRT-III assemblies and catalyzes their disassembly, possibly in combination with membrane fission. Redistributes the ESCRT-III components to the cytoplasm for further rounds of MVB sorting. MVBs contain intraluminal vesicles (ILVs) that are generated by invagination and scission from the limiting membrane of the endosome and mostly are delivered to lysosomes enabling degradation of membrane proteins, such as stimulated growth factor receptors, lysosomal enzymes and lipids. It is required for proper accomplishment of various processes including the regulation of endosome size, primary cilium organization, mitotic spindle organization, chromosome segregation, and nuclear envelope sealing and spindle disassembly during anaphase. Involved in cytokinesis: retained at the midbody by ZFYVE19/ANCHR and CHMP4C until abscission checkpoint signaling is terminated at late cytokinesis. It is then released following dephosphorylation of CHMP4C, leading to abscission. VPS4A/B are required for the exosomal release of SDCBP, CD63 and syndecan. Critical for normal erythroblast cytokinesis and correct erythropoiesis. (Microbial infection) In conjunction with the ESCRT machinery also appears to function in topologically equivalent membrane fission events, such as the terminal stages of cytokinesis and enveloped virus budding (HIV-1 and other lentiviruses). The polypeptide is Vacuolar protein sorting-associated protein 4A (Homo sapiens (Human)).